Consider the following 463-residue polypeptide: MADFIVKDLSLADFGRKELDIAETEMPGLMALREEFGASKPLKGARIAGSLHMTVQTAVLIETLVALGADVRWASCNIFSTQDHAAAAIAASGVPVFAIKGETLEDYWAYTDKIFQFADGTCNMILDDGGDATLYILLGARVEAGETDLIAVPQSDEEVCLFNQIRKRMAETPGWFTKQRDAIKGVSEETTTGVHRLYDLHKKGLLPFPAINVNDSVTKSKFDNKYGCKESLVDGIRRATDVMMAGKVAVVCGYGDVGKGSAASLRGAGARVKVTEVDPICALQAAMDGFEVVVLEDVVQDADIFITTTGNRDVIRIEHMREMKDMAIVGNIGHFDNEIQVAALKNHKWTNIKDQVDMIEMPSGSRIILLSEGRLLNLGNATGHPSFVMSASFTNQVLAQIELWTKGADYQPGVYILPKALDEKVARLHLKKIGVKLTDVRPEQADYIGVKVEGPFKAEHYRY.

Substrate contacts are provided by Thr-54, Asp-128, and Glu-189. Thr-190 to Thr-192 contributes to the NAD(+) binding site. The substrate site is built by Lys-219 and Asp-223. Residues Asn-224, Gly-253 to Gly-258, Glu-276, Asn-311, Ile-332 to His-334, and Asn-377 each bind NAD(+).

This sequence belongs to the adenosylhomocysteinase family. NAD(+) serves as cofactor.

Its subcellular location is the cytoplasm. The catalysed reaction is S-adenosyl-L-homocysteine + H2O = L-homocysteine + adenosine. It functions in the pathway amino-acid biosynthesis; L-homocysteine biosynthesis; L-homocysteine from S-adenosyl-L-homocysteine: step 1/1. May play a key role in the regulation of the intracellular concentration of adenosylhomocysteine. In Cereibacter sphaeroides (Rhodobacter sphaeroides), this protein is Adenosylhomocysteinase.